Consider the following 552-residue polypeptide: Histone deacetylase 15 (552 aa).

A RanBP2-type zinc finger spans residues 86-115 (EFVKWCCVNCTMSNPGDMVHCCICGEHKES). Residues 149–462 (STAVGFDERM…ATAVIKVLLG (314 aa)) form a histone deacetylase region. His277 functions as the Proton donor/acceptor in the catalytic mechanism. The Zn(2+) site is built by Asp313, His315, and Asp404.

Belongs to the histone deacetylase family. HD type 2 subfamily. As to quaternary structure, interacts with PIF3 in the dark. Interacts with HY5. Interacts with MYB96. Forms homotetramers. Zn(2+) is required as a cofactor. As to expression, expressed in stems, leaves, flowers, siliques and mature seeds.

It is found in the nucleus. The protein resides in the cytoplasm. It catalyses the reaction N(6)-acetyl-L-lysyl-[histone] + H2O = L-lysyl-[histone] + acetate. With respect to regulation, inhibited by trichostatin A (TSA), a well-known histone deacetylase inhibitor. Functionally, responsible for the deacetylation of lysine residues on the N-terminal part of the core histones (H2A, H2B, H3 and H4). Histone deacetylation gives a tag for epigenetic repression and plays an important role in transcriptional regulation, cell cycle progression and developmental events. Histone deacetylases act via the formation of large multiprotein complexes. Represses chlorophyll biosynthesis and photosynthesis in the dark. Is recruited by PIF3 to the promoters of chlorophyll biosynthetic and photosynthetic genes, and represses their transcription by histone deacetylation. Involved in the repression of hypocotyl cell elongation to promote photomorphogenesis. Is recruited by HY5 to the promoters of a subset of cell wall organization and auxin signaling-related genes, and represses gene expression by decreasing the levels of histone H4 acetylation in a light-dependent manner. Promotes abscisic acid (ABA) signaling. Is recruited by MYB96 to the promoters of a subset of Rho GTPase (ROP) genes, which repress ABA signaling at the early stages of signal transduction. Represses ROP expression by removing acetyl groups of histone H3 and H4 from the cognate regions, particularly in the presence of ABA. Represses the plant response to elevated ambient temperature by directly repressing warm temperature-responsive genes. This chain is Histone deacetylase 15, found in Arabidopsis thaliana (Mouse-ear cress).